The primary structure comprises 449 residues: Na(+)/H(+) antiporter NhaA 1 (449 aa).

The next 11 helical transmembrane spans lie at 38 to 58, 79 to 99, 117 to 137, 145 to 165, 175 to 195, 198 to 218, 240 to 260, 311 to 331, 347 to 367, 390 to 410, and 422 to 442; these read GILL…PWAA, FTIR…VVGM, VLPL…YAAF, AGWA…LTLV, VFLT…IALF, SGLH…LACL, MHHG…FMPA, FVHL…ALAN, PLPL…IFLF, GVAV…GLAF, and LGIL…LRFV.

This sequence belongs to the NhaA Na(+)/H(+) (TC 2.A.33) antiporter family.

It is found in the cell inner membrane. It catalyses the reaction Na(+)(in) + 2 H(+)(out) = Na(+)(out) + 2 H(+)(in). Its function is as follows. Na(+)/H(+) antiporter that extrudes sodium in exchange for external protons. The protein is Na(+)/H(+) antiporter NhaA 1 of Myxococcus xanthus (strain DK1622).